We begin with the raw amino-acid sequence, 290 residues long: uncharacterized protein (290 aa).

It is found in the cytoplasm. This is an uncharacterized protein from Saccharomyces cerevisiae (strain ATCC 204508 / S288c) (Baker's yeast).